The following is a 380-amino-acid chain: Lipid-A-disaccharide synthase (380 aa).

The protein belongs to the LpxB family.

The enzyme catalyses a lipid X + a UDP-2-N,3-O-bis[(3R)-3-hydroxyacyl]-alpha-D-glucosamine = a lipid A disaccharide + UDP + H(+). Its pathway is bacterial outer membrane biogenesis; LPS lipid A biosynthesis. Condensation of UDP-2,3-diacylglucosamine and 2,3-diacylglucosamine-1-phosphate to form lipid A disaccharide, a precursor of lipid A, a phosphorylated glycolipid that anchors the lipopolysaccharide to the outer membrane of the cell. The protein is Lipid-A-disaccharide synthase of Francisella tularensis subsp. tularensis (strain FSC 198).